Here is a 48-residue protein sequence, read N- to C-terminus: Cathepsin B (48 aa).

The protein belongs to the peptidase C1 family. In terms of assembly, dimer of a heavy chain and a light chain cross-linked by a disulfide bond.

The protein localises to the lysosome. It catalyses the reaction Hydrolysis of proteins with broad specificity for peptide bonds. Preferentially cleaves -Arg-Arg-|-Xaa bonds in small molecule substrates (thus differing from cathepsin L). In addition to being an endopeptidase, shows peptidyl-dipeptidase activity, liberating C-terminal dipeptides.. In terms of biological role, thiol protease which is believed to participate in intracellular degradation and turnover of proteins. Has also been implicated in tumor invasion and metastasis. The protein is Cathepsin B (CTSB) of Coturnix japonica (Japanese quail).